A 369-amino-acid chain; its full sequence is Chaperone protein DnaJ (369 aa).

Residues 7–73 (DYYEILGVPR…QKRAMYDRFG (67 aa)) enclose the J domain. The segment at 143-225 (GAEIPVEYER…CGGSGRVLRK (83 aa)) adopts a CR-type zinc-finger fold. Residues Cys-156, Cys-159, Cys-173, Cys-176, Cys-199, Cys-202, Cys-213, and Cys-216 each coordinate Zn(2+). CXXCXGXG motif repeat units lie at residues 156–163 (CPRCGGTG), 173–180 (CPSCGGTG), 199–206 (CERCGGTG), and 213–220 (CHECGGSG).

This sequence belongs to the DnaJ family. In terms of assembly, homodimer. Zn(2+) serves as cofactor.

Its subcellular location is the cytoplasm. Its function is as follows. Participates actively in the response to hyperosmotic and heat shock by preventing the aggregation of stress-denatured proteins and by disaggregating proteins, also in an autonomous, DnaK-independent fashion. Unfolded proteins bind initially to DnaJ; upon interaction with the DnaJ-bound protein, DnaK hydrolyzes its bound ATP, resulting in the formation of a stable complex. GrpE releases ADP from DnaK; ATP binding to DnaK triggers the release of the substrate protein, thus completing the reaction cycle. Several rounds of ATP-dependent interactions between DnaJ, DnaK and GrpE are required for fully efficient folding. Also involved, together with DnaK and GrpE, in the DNA replication of plasmids through activation of initiation proteins. The polypeptide is Chaperone protein DnaJ (Thermotoga petrophila (strain ATCC BAA-488 / DSM 13995 / JCM 10881 / RKU-1)).